A 380-amino-acid polypeptide reads, in one-letter code: Set1 complex component swd3 (380 aa).

WD repeat units follow at residues 52-91 (GHEKSVTCVSVSPNKRWIATSSSDGTIKIWSALTFRLECT), 94-133 (GHYRGISQVKWATGSKYLASASDDKTIRIWDFEKRCSVRC), 136-177 (GHTN…RMLP), 179-219 (HSEP…KTLV), 221-262 (PINV…RIFD), 291-330 (NDSSYPDDAESFMHDAYLLIPSEDGTIQITDPSTKIIIDD), and 335-374 (SDDPETSLLNVTSLGPFIITSGTDPYVRVWAPSLLLSKHE). A Phosphoserine modification is found at S379.

In terms of assembly, component of the Set1 complex composed of ash2, sdc1, set1, shg1, spp1, swd1, swd2 and swd3.

It is found in the nucleus. The Set1 complex specifically methylates 'Lys-4' of histone H3. This chain is Set1 complex component swd3, found in Schizosaccharomyces pombe (strain 972 / ATCC 24843) (Fission yeast).